The sequence spans 312 residues: Ribonuclease HIII (312 aa).

Residues 95–311 form the RNase H type-2 domain; the sequence is FNCIGSDEAG…REKAQKILKP (217 aa). The a divalent metal cation site is built by Asp101, Glu102, and Asp206.

The protein belongs to the RNase HII family. RnhC subfamily. Requires Mn(2+) as cofactor. The cofactor is Mg(2+).

The protein localises to the cytoplasm. The catalysed reaction is Endonucleolytic cleavage to 5'-phosphomonoester.. Its function is as follows. Endonuclease that specifically degrades the RNA of RNA-DNA hybrids. The protein is Ribonuclease HIII of Staphylococcus aureus (strain MSSA476).